Consider the following 104-residue polypeptide: SOSS complex subunit C (104 aa).

Residue alanine 2 is modified to N-acetylalanine. Residue serine 50 is modified to Phosphoserine.

It belongs to the SOSS-C family. In terms of assembly, component of the SOSS complex, composed of SOSS-B (SOSS-B1/NABP2 or SOSS-B2/NABP1), SOSS-A/INTS3 and SOSS-C/INIP. SOSS complexes containing SOSS-B1/NABP2 are more abundant than complexes containing SOSS-B2/NABP1. Interacts with INTS3; the interaction is direct.

The protein resides in the nucleus. Functionally, component of the SOSS complex, a multiprotein complex that functions downstream of the MRN complex to promote DNA repair and G2/M checkpoint. The SOSS complex associates with single-stranded DNA at DNA lesions and influences diverse endpoints in the cellular DNA damage response including cell-cycle checkpoint activation, recombinational repair and maintenance of genomic stability. Required for efficient homologous recombination-dependent repair of double-strand breaks (DSBs) and ATM-dependent signaling pathways. The polypeptide is SOSS complex subunit C (Inip) (Mus musculus (Mouse)).